The sequence spans 850 residues: Probable beta-glucosidase J (850 aa).

2 N-linked (GlcNAc...) asparagine glycosylation sites follow: asparagine 43 and asparagine 52. Aspartate 254 is an active-site residue. In terms of domain architecture, PA14 spans 423–583 (TGERGYTFRV…DAETAIKQAV (161 aa)). N-linked (GlcNAc...) asparagine glycosylation occurs at asparagine 508.

It belongs to the glycosyl hydrolase 3 family.

The protein resides in the secreted. The enzyme catalyses Hydrolysis of terminal, non-reducing beta-D-glucosyl residues with release of beta-D-glucose.. Its pathway is glycan metabolism; cellulose degradation. In terms of biological role, beta-glucosidases are one of a number of cellulolytic enzymes involved in the degradation of cellulosic biomass. Catalyzes the last step releasing glucose from the inhibitory cellobiose. This chain is Probable beta-glucosidase J (bglJ), found in Emericella nidulans (strain FGSC A4 / ATCC 38163 / CBS 112.46 / NRRL 194 / M139) (Aspergillus nidulans).